The primary structure comprises 340 residues: Dihydroorotase (340 aa).

Zn(2+)-binding residues include His14 and His16. Substrate-binding positions include 16–18 (HLR) and Asn42. Zn(2+) is bound by residues Lys100, His137, and His175. Residue Lys100 is modified to N6-carboxylysine. His137 serves as a coordination point for substrate. Leu220 is a substrate binding site. Zn(2+) is bound at residue Asp248. The active site involves Asp248. Substrate-binding residues include His252 and Ala264.

Belongs to the metallo-dependent hydrolases superfamily. DHOase family. Class II DHOase subfamily. Homodimer. It depends on Zn(2+) as a cofactor.

The catalysed reaction is (S)-dihydroorotate + H2O = N-carbamoyl-L-aspartate + H(+). The protein operates within pyrimidine metabolism; UMP biosynthesis via de novo pathway; (S)-dihydroorotate from bicarbonate: step 3/3. Catalyzes the reversible cyclization of carbamoyl aspartate to dihydroorotate. This Sphingopyxis alaskensis (strain DSM 13593 / LMG 18877 / RB2256) (Sphingomonas alaskensis) protein is Dihydroorotase.